The chain runs to 530 residues: MEDDSLYLGGEWQFNHFSKLTSSRPDAAFAEIQRTSLPEKSPLSCETRVDLCDDLAPVARQLAPREKLPLSSRRPAAVGAGLQNMGNTCYVNASLQCLTYTPPLANYMLSREHSQTCHRHKGCMLCTMQAHITRALHNPGHVIQPSQALAAGFHRGKQEDAHEFLMFTVDAMKKACLPGHKQVDHHSKDTTLIHQIFGGYWRSQIKCLHCHGISDTFDPYLDIALDIQAAQSVQQALEQLVKPEELNGENAYHCGVCLQRAPASKTLTLHTSAKVLILVLKRFSDVTGNKIAKNVQYPECLDMQPYMSQQNTGPLVYVLYAVLVHAGWSCHNGHYFSYVKAQEGQWYKMDDAEVTAASITSVLSQQAYVLFYIQKSEWERHSESVSRGREPRALGAEDTDRRATQGELKRDHPCLQAPELDEHLVERATQESTLDHWKFLQEQNKTKPEFNVRKVEGTLPPDVLVIHQSKYKCGMKNHHPEQQSSLLNLSSSTPTHQESMNTGTLASLRGRARRSKGKNKHSKRALLVCQ.

The USP domain maps to 80 to 375; sequence AGLQNMGNTC…QAYVLFYIQK (296 aa). Catalysis depends on cysteine 89, which acts as the Nucleophile. The Proton acceptor role is filled by histidine 334. Basic and acidic residues-rich tracts occupy residues 382-392 and 398-411; these read SESVSRGREPR and DTDR…LKRD. Disordered regions lie at residues 382-411 and 477-530; these read SESV…LKRD and NHHP…LVCQ. Over residues 493–505 the composition is skewed to polar residues; sequence TPTHQESMNTGTL. Positions 510-524 are enriched in basic residues; sequence GRARRSKGKNKHSKR.

This sequence belongs to the peptidase C19 family. USP17 subfamily.

The protein resides in the nucleus. Its subcellular location is the endoplasmic reticulum. It catalyses the reaction Thiol-dependent hydrolysis of ester, thioester, amide, peptide and isopeptide bonds formed by the C-terminal Gly of ubiquitin (a 76-residue protein attached to proteins as an intracellular targeting signal).. In terms of biological role, deubiquitinating enzyme that removes conjugated ubiquitin from specific proteins to regulate different cellular processes that may include cell proliferation, progression through the cell cycle, apoptosis, cell migration, and the cellular response to viral infection. This Homo sapiens (Human) protein is Ubiquitin carboxyl-terminal hydrolase 17-like protein 17 (USP17L17).